Reading from the N-terminus, the 389-residue chain is Phospho-N-acetylmuramoyl-pentapeptide-transferase (389 aa).

10 consecutive transmembrane segments (helical) span residues 25–45 (RAVMATVTALLIGLAAGPWVI), 73–93 (TMGGVLILIGIFISCILWADL), 97–117 (FIWIVMIVTFGFGLVGWVDDY), 134–154 (FFWQTLIGLFAAIYLAFSVSE), 190–210 (VSYPLGIMGFIILSYLVIVGS), 222–242 (GLVIMPVILVGAALGAFAYVM), 258–278 (GAGELMIFCGAMGGAGLAFLW), 286–306 (VFMGDVGALALGGALGTIAVI), 311–331 (IVLFVMGGIFVAETISVMLQV), and 366–386 (QVVVRFWIITILLVLIGLSSL).

The protein belongs to the glycosyltransferase 4 family. MraY subfamily. Requires Mg(2+) as cofactor.

It localises to the cell inner membrane. It carries out the reaction UDP-N-acetyl-alpha-D-muramoyl-L-alanyl-gamma-D-glutamyl-meso-2,6-diaminopimeloyl-D-alanyl-D-alanine + di-trans,octa-cis-undecaprenyl phosphate = di-trans,octa-cis-undecaprenyl diphospho-N-acetyl-alpha-D-muramoyl-L-alanyl-D-glutamyl-meso-2,6-diaminopimeloyl-D-alanyl-D-alanine + UMP. It functions in the pathway cell wall biogenesis; peptidoglycan biosynthesis. Its function is as follows. Catalyzes the initial step of the lipid cycle reactions in the biosynthesis of the cell wall peptidoglycan: transfers peptidoglycan precursor phospho-MurNAc-pentapeptide from UDP-MurNAc-pentapeptide onto the lipid carrier undecaprenyl phosphate, yielding undecaprenyl-pyrophosphoryl-MurNAc-pentapeptide, known as lipid I. The protein is Phospho-N-acetylmuramoyl-pentapeptide-transferase of Polynucleobacter necessarius subsp. necessarius (strain STIR1).